We begin with the raw amino-acid sequence, 513 residues long: ATP synthase subunit alpha (513 aa).

169–176 is an ATP binding site; that stretch reads GDRQTGKT.

The protein belongs to the ATPase alpha/beta chains family. As to quaternary structure, F-type ATPases have 2 components, CF(1) - the catalytic core - and CF(0) - the membrane proton channel. CF(1) has five subunits: alpha(3), beta(3), gamma(1), delta(1), epsilon(1). CF(0) has three main subunits: a(1), b(2) and c(9-12). The alpha and beta chains form an alternating ring which encloses part of the gamma chain. CF(1) is attached to CF(0) by a central stalk formed by the gamma and epsilon chains, while a peripheral stalk is formed by the delta and b chains.

Its subcellular location is the cell inner membrane. The enzyme catalyses ATP + H2O + 4 H(+)(in) = ADP + phosphate + 5 H(+)(out). In terms of biological role, produces ATP from ADP in the presence of a proton gradient across the membrane. The alpha chain is a regulatory subunit. The chain is ATP synthase subunit alpha from Haemophilus ducreyi (strain 35000HP / ATCC 700724).